Here is a 335-residue protein sequence, read N- to C-terminus: Fructose-1,6-bisphosphatase class 1 (335 aa).

Mg(2+) contacts are provided by Glu92, Asp114, Leu116, and Asp117. Substrate-binding positions include Asp117–Ser120 and Asn209. Glu281 provides a ligand contact to Mg(2+).

The protein belongs to the FBPase class 1 family. Homotetramer. Mg(2+) serves as cofactor.

The protein localises to the cytoplasm. It carries out the reaction beta-D-fructose 1,6-bisphosphate + H2O = beta-D-fructose 6-phosphate + phosphate. It participates in carbohydrate biosynthesis; gluconeogenesis. This chain is Fructose-1,6-bisphosphatase class 1, found in Nitrosococcus oceani (strain ATCC 19707 / BCRC 17464 / JCM 30415 / NCIMB 11848 / C-107).